The chain runs to 361 residues: Porphobilinogen deaminase (361 aa).

Position 2 is an N-acetylserine (Ser-2). Ser-69 carries the post-translational modification Phosphoserine. Residue Lys-74 is modified to N6-acetyllysine. Ser-147 bears the Phosphoserine mark. At Cys-261 the chain carries S-(dipyrrolylmethanemethyl)cysteine.

Belongs to the HMBS family. In terms of assembly, monomer. Requires dipyrromethane as cofactor.

Its subcellular location is the cytoplasm. It is found in the cytosol. The catalysed reaction is 4 porphobilinogen + H2O = hydroxymethylbilane + 4 NH4(+). Its pathway is porphyrin-containing compound metabolism; protoporphyrin-IX biosynthesis; coproporphyrinogen-III from 5-aminolevulinate: step 2/4. In terms of biological role, as part of the heme biosynthetic pathway, catalyzes the sequential polymerization of four molecules of porphobilinogen to form hydroxymethylbilane, also known as preuroporphyrinogen. Catalysis begins with the assembly of the dipyrromethane cofactor by the apoenzyme from two molecules of porphobilinogen or from preuroporphyrinogen. The covalently linked cofactor acts as a primer, around which the tetrapyrrole product is assembled. In the last step of catalysis, the product, preuroporphyrinogen, is released, leaving the cofactor bound to the holodeaminase intact. This is Porphobilinogen deaminase (HMBS) from Bos taurus (Bovine).